A 196-amino-acid chain; its full sequence is MADLNSLDVLIQALRRLPGVGVKSASRMAFHLLQHDRPGALALSRALQVAADQMRHCERCHTFTQADICATCLDPRRDASKLCVVETPADQSALERTGAYHGLYFVLMGKLSPLDGIGPKDIGLKGLFDRACDGTVQEVILATNFTAEGEATAHVISEGLKSRGLRLTRLARGVPVGSELEYVDLGTIAHALLDRR.

The segment at 57 to 72 adopts a C4-type zinc-finger fold; that stretch reads CERCHTFTQADICATC. The 96-residue stretch at 80 to 175 folds into the Toprim domain; that stretch reads SKLCVVETPA…RLTRLARGVP (96 aa).

The protein belongs to the RecR family.

Functionally, may play a role in DNA repair. It seems to be involved in an RecBC-independent recombinational process of DNA repair. It may act with RecF and RecO. This chain is Recombination protein RecR, found in Albidiferax ferrireducens (strain ATCC BAA-621 / DSM 15236 / T118) (Rhodoferax ferrireducens).